The primary structure comprises 948 residues: Puromycin-sensitive aminopeptidase (948 aa).

Substrate is bound by residues glutamate 206 and 341–345 (GAMEN). Histidine 377 serves as a coordination point for Zn(2+). The active-site Proton acceptor is the glutamate 378. Histidine 381 and glutamate 400 together coordinate Zn(2+).

Belongs to the peptidase M1 family. Zn(2+) serves as cofactor. Expressed mainly in intestinal cells in the posterior part of the intestine and in amphid sensory neurons and nerve ring neurons. Expressed in neurons in the male tail. Expressed in mature spermatids (at protein level).

The protein resides in the cytoplasm. The protein localises to the cell cortex. It localises to the chromosome. It is found in the cytoskeleton. Its subcellular location is the spindle pole. The enzyme catalyses Release of an N-terminal amino acid, preferentially alanine, from a wide range of peptides, amides and arylamides.. Its activity is regulated as follows. Inhibited by chelating agent 1,10-phenanthroline, aminopeptidase inhibitors actinonin, amastatin, and leuhistin, and to a lesser extent by puromycin. Aminopeptidase. Required for the exit from meiosis, probably upstream of cyclin cyb-3. Involved in the establishment of the anterior-posterior polarity at the embryonic 1-cell stage by regulating the dynamics of sperm-donated centrosomes. Plays a role in oocyte maturation. Required for embryonic development. The chain is Puromycin-sensitive aminopeptidase from Caenorhabditis elegans.